The chain runs to 180 residues: PRA1 family protein F1 (180 aa).

Transmembrane regions (helical) follow at residues 63-83, 84-104, 123-143, and 145-165; these read ANTVYFQTNYTIVVLFSVFLS, LIWNPFSLLVLLALLGAWLFL, IVLIIMSVITLSILFLTDAKL, and IAVAIVAGALAVLSHAAVRKT.

Belongs to the PRA1 family. In terms of assembly, interacts with PRA1F2. In terms of tissue distribution, expressed in hypocotyls, leaf bases and shoot apex.

It is found in the endosome membrane. May be involved in both secretory and endocytic intracellular trafficking in the endosomal/prevacuolar compartments. The chain is PRA1 family protein F1 (PRA1F1) from Arabidopsis thaliana (Mouse-ear cress).